The primary structure comprises 463 residues: Glutamate--tRNA ligase (463 aa).

The 'HIGH' region signature appears at 10-20 (PSPTGYLHIGG). Positions 252–256 (KLSKR) match the 'KMSKS' region motif. Residue K255 participates in ATP binding.

This sequence belongs to the class-I aminoacyl-tRNA synthetase family. Glutamate--tRNA ligase type 1 subfamily. In terms of assembly, monomer.

It localises to the cytoplasm. The catalysed reaction is tRNA(Glu) + L-glutamate + ATP = L-glutamyl-tRNA(Glu) + AMP + diphosphate. In terms of biological role, catalyzes the attachment of glutamate to tRNA(Glu) in a two-step reaction: glutamate is first activated by ATP to form Glu-AMP and then transferred to the acceptor end of tRNA(Glu). The polypeptide is Glutamate--tRNA ligase (Mycoplasmopsis agalactiae (strain NCTC 10123 / CIP 59.7 / PG2) (Mycoplasma agalactiae)).